The sequence spans 438 residues: Aflatoxin cluster transcriptional coactivator aflS (438 aa).

One can recognise an HTH iclR-type domain in the interval 65–134 (LALYNQLLAC…PSPGHVAHSV (70 aa)). The segment at residues 95–114 (FEDVADIAGVPECRLRRLVR) is a DNA-binding region (H-T-H motif).

As to quaternary structure, interacts with aflR.

Its subcellular location is the nucleus. Transcription factor; part of the gene cluster that mediates the biosynthesis of aflatoxin, a polyketide-derived furanocoumarin which is part of the most toxic and carcinogenic compounds among the known mycotoxins. AflS exhibits no DNA-binding capability on its own, but forms a complex with the other aflatoxin cluster transcription factor aflR and acts as a modulator of aflR's DNA-binding by decreasing its DNA-binding affinity. The sequence is that of Aflatoxin cluster transcriptional coactivator aflS from Aspergillus flavus (strain ATCC 200026 / FGSC A1120 / IAM 13836 / NRRL 3357 / JCM 12722 / SRRC 167).